A 379-amino-acid polypeptide reads, in one-letter code: MAKRDYYEVLGVAKNASDDEIKKAYRKLAMKHHPDRNPGNKDAEGHFKEVKEAYEMLSDSQKRAAYDQYGHAGVDPNMGGAGAQGFGGFADAFGDIFGDIFGQAAGGAARGGGRAGPQVYRGADLRYSMEITLEQAAHGYDTQIRVPSWVSCEICHGSGAKPGTKPETCPTCSGSGSVRMSQGFFSIQQTCPKCHGTGTYIPEPCGHCHGAGKVKETKTLEVKIPAGIDDGMRIRSAGNGEPGINGGPSGDLYVEIHIKQHSVFERDGDDLHCQMPIPFTTAALGGEIEVPTLAGRASFTVPEGTQSGKTFRLRGKGIKGLRSSIAGDLYVHVQVETPVKLTEPQRDLLKQFEKALVEGGSRHSPQSKSWFDRVKSFFD.

A J domain is found at 5 to 70 (DYYEVLGVAK…QKRAAYDQYG (66 aa)). A CR-type zinc finger spans residues 139–217 (GYDTQIRVPS…CHGAGKVKET (79 aa)). Zn(2+) contacts are provided by cysteine 152, cysteine 155, cysteine 169, cysteine 172, cysteine 191, cysteine 194, cysteine 205, and cysteine 208. 4 CXXCXGXG motif repeats span residues 152–159 (CEICHGSG), 169–176 (CPTCSGSG), 191–198 (CPKCHGTG), and 205–212 (CGHCHGAG).

This sequence belongs to the DnaJ family. In terms of assembly, homodimer. It depends on Zn(2+) as a cofactor.

Its subcellular location is the cytoplasm. In terms of biological role, participates actively in the response to hyperosmotic and heat shock by preventing the aggregation of stress-denatured proteins and by disaggregating proteins, also in an autonomous, DnaK-independent fashion. Unfolded proteins bind initially to DnaJ; upon interaction with the DnaJ-bound protein, DnaK hydrolyzes its bound ATP, resulting in the formation of a stable complex. GrpE releases ADP from DnaK; ATP binding to DnaK triggers the release of the substrate protein, thus completing the reaction cycle. Several rounds of ATP-dependent interactions between DnaJ, DnaK and GrpE are required for fully efficient folding. Also involved, together with DnaK and GrpE, in the DNA replication of plasmids through activation of initiation proteins. The protein is Chaperone protein DnaJ of Paraburkholderia phytofirmans (strain DSM 17436 / LMG 22146 / PsJN) (Burkholderia phytofirmans).